We begin with the raw amino-acid sequence, 1169 residues long: C5a peptidase (1169 aa).

Positions 1-31 (MRKKQKLPFDKLAIALMSTSILLNAQSDIKA) are cleaved as a signal peptide. The interval 33–111 (TVTEDTPATE…ETIRDLNDPS (79 aa)) is disordered. The segment covering 48–67 (PQQTAVSEEAPSSSSKETNP) has biased composition (polar residues). The region spanning 101–583 (KETIRDLNDP…AGAVDAKKAS (483 aa)) is the Peptidase S8 domain. Basic and acidic residues predominate over residues 102 to 111 (ETIRDLNDPS). Residues Asp-132, His-195, and Ser-514 each act as charge relay system in the active site. The interval 1028–1135 (NLLEGHSNKP…RDQLPTTNDK (108 aa)) is disordered. 3 stretches are compositionally biased toward basic and acidic residues: residues 1033–1056 (HSNK…KPEQ), 1063–1073 (PDKKPEAKPEQ), and 1080–1092 (PDKK…EKDS). 4 consecutive repeat copies span residues 1036–1052 (KPEQ…TPET), 1053–1069 (KPEQ…KPEA), 1070–1086 (KPEQ…KPET), and 1087–1103 (KPEK…TPQK). Residues 1036–1103 (KPEQDGSDQV…GQTPGKTPQK (68 aa)) are 4 X 17 AA tandem repeats. A compositionally biased stretch (polar residues) spans 1093–1108 (SGQTPGKTPQKGQPSR). An LPXTG sorting signal motif is present at residues 1129-1133 (LPTTN). Thr-1132 carries the post-translational modification Pentaglycyl murein peptidoglycan amidated threonine. Positions 1133-1169 (NDKDTNRLHLLKLVMTTFFFGLVAHIFKTKRQKETKK) are cleaved as a propeptide — removed by sortase.

The protein belongs to the peptidase S8 family. Post-translationally, cleaved by SpeB protease; leading to its degradation. Degradation by SpeB is probably strictly regulated to preserve integrity of C5a peptidase.

Its subcellular location is the secreted. It is found in the cell wall. It carries out the reaction The primary cleavage site is at 67-His-|-Lys-68 in human C5a with a minor secondary cleavage site at 58-Ala-|-Ser-59.. This virulence factor of S.pyogenes specifically cleaves the human serum chemotaxin C5a at '68-Lys-|-Asp-69' bond near its C-terminus, destroying its ability to serve as a chemoattractant. The sequence is that of C5a peptidase (scpA) from Streptococcus pyogenes serotype M3 (strain ATCC BAA-595 / MGAS315).